The primary structure comprises 165 residues: uncharacterized protein (165 aa).

This is an uncharacterized protein from Escherichia coli (strain K12).